The following is a 125-amino-acid chain: Fluoride-specific ion channel FluC (125 aa).

The next 4 membrane-spanning stretches (helical) occupy residues 5–25 (LLVA…GALV), 29–49 (LGAG…FLIG), 66–86 (LFLA…SYET), and 95–115 (VGKA…LAFL). Residues Gly74 and Thr77 each coordinate Na(+).

It belongs to the fluoride channel Fluc/FEX (TC 1.A.43) family.

Its subcellular location is the cell inner membrane. The catalysed reaction is fluoride(in) = fluoride(out). Its activity is regulated as follows. Na(+) is not transported, but it plays an essential structural role and its presence is essential for fluoride channel function. Functionally, fluoride-specific ion channel. Important for reducing fluoride concentration in the cell, thus reducing its toxicity. The protein is Fluoride-specific ion channel FluC of Thermus thermophilus (strain ATCC 27634 / DSM 579 / HB8).